The chain runs to 1035 residues: Protein hir-1 (1035 aa).

WD repeat units lie at residues 15 to 54 (QKDFEVYSCHVSPDGKRLATAGGDGHVRVWSVEAIFNSHD), 68 to 107 (HHLGTIHSVRFSPNGRYLASGADDKIICIYHLDSNPPSHT), 129 to 168 (GHDNDVQDLAWSPDNSLLVSVGLDSKIVVWSGHTFEKLKT), 171 to 210 (VHQSHVKGITFDPANKFFATASDDRTIKIFRYTAPAPNAT), 232 to 275 (PLTT…SEIN), 299 to 338 (DENSNANGAASPGLVTVIASAGQDKTLTIWNTNTSRPVLI), and 342 to 383 (IASK…WVAK). Residues 393 to 479 (KYGGSRKGMG…PEEESADKTA (87 aa)) are disordered. Residues 408–425 (DGLHLENHSKEKELRGAE) show a composition bias toward basic and acidic residues.

Belongs to the WD repeat HIR1 family.

It localises to the nucleus. Required for replication-independent chromatin assembly and for the periodic repression of histone gene transcription during the cell cycle. The protein is Protein hir-1 (hir-1) of Neurospora crassa (strain ATCC 24698 / 74-OR23-1A / CBS 708.71 / DSM 1257 / FGSC 987).